A 386-amino-acid chain; its full sequence is Histidine decarboxylase (386 aa).

His-120 lines the substrate pocket. At Lys-233 the chain carries N6-(pyridoxal phosphate)lysine.

It belongs to the group II decarboxylase family. Homotetramer. Pyridoxal 5'-phosphate serves as cofactor.

The enzyme catalyses L-histidine + H(+) = histamine + CO2. The polypeptide is Histidine decarboxylase (Vibrio campbellii (strain ATCC BAA-1116)).